The sequence spans 380 residues: Succinyl-diaminopimelate desuccinylase (380 aa).

Residue H69 participates in Zn(2+) binding. The active site involves D71. D102 is a Zn(2+) binding site. E136 (proton acceptor) is an active-site residue. Residues E137, E165, and H351 each coordinate Zn(2+).

Belongs to the peptidase M20A family. DapE subfamily. Homodimer. Requires Zn(2+) as cofactor. The cofactor is Co(2+).

The catalysed reaction is N-succinyl-(2S,6S)-2,6-diaminopimelate + H2O = (2S,6S)-2,6-diaminopimelate + succinate. The protein operates within amino-acid biosynthesis; L-lysine biosynthesis via DAP pathway; LL-2,6-diaminopimelate from (S)-tetrahydrodipicolinate (succinylase route): step 3/3. Catalyzes the hydrolysis of N-succinyl-L,L-diaminopimelic acid (SDAP), forming succinate and LL-2,6-diaminopimelate (DAP), an intermediate involved in the bacterial biosynthesis of lysine and meso-diaminopimelic acid, an essential component of bacterial cell walls. The chain is Succinyl-diaminopimelate desuccinylase from Bordetella petrii (strain ATCC BAA-461 / DSM 12804 / CCUG 43448).